The following is a 611-amino-acid chain: MAETAGSSGQGGGAYICFEADCSDSDTEVDSPVQCSDSSDEDLVDNANIVPGNHLELFQTQEKEAGERQISLLKRKFCLSPGTSEVEELSPGLAGIRISPPKRNPVVRRRLFDAGGRDAVRTPRDHEVNSSPEPRSQVQSGSSSRSWEGHLESINEPASDGNMAAVMHKLFKTLYIAGFGEITRVFQSDKTNNNQWVIAAHGASEVLYAASFEILSKHCSYLQASRKVHETGSMSLFLAVFNVGKSRETVRKLISGVLNTPCSRLLLQPPKIRGLCPALFWFKLGLSPATQTHGTTPDWIKQQTNVAYNTGEASKFDFGTMVQWAYDHRLTEECKIAYQYAKCAGTDLNAKAFLASTNQARLVKDCCTMVKHYLRAEEQSLTISAFIKRRCDNATGKGSWLSIMNLLKFQGIEPINFVNALKPWLKGTPKHNCIAIVGPPNSGKSLLCNTLMSFLGGKVLTFANHSSHFWLAPLTDCRVALIDDATHACWRYFDTYLRNVLDGYPVCIDRKHKSAVQLKAPPLLLTSNIDVHADEKYFYLQSRVKTFYFKEPCPASDTGEPLFFITDADWKNFFERLWERLDLSDQEDEVDEDECSQRSFTCSARNTDAMH.

Positions K74 to K76 match the Nuclear localization signal motif. Phosphoserine; by host is present on residues S80, S84, and S90. The short motif at L89 to I98 is the Nuclear export signal element. Residues F112 to V128 show a composition bias toward basic and acidic residues. Residues F112–I154 form a disordered region. Positions R135 to S146 are enriched in low complexity. The interval S146 to A313 is DNA-binding region. Positions I412 to L562 constitute an SF3 helicase domain. Residue G438 to S445 coordinates ATP. K519 is covalently cross-linked (Glycyl lysine isopeptide (Lys-Gly) (interchain with G-Cter in SUMO)).

The protein belongs to the papillomaviridae E1 protein family. In terms of assembly, can form hexamers. Interacts with E2 protein; this interaction increases E1 DNA binding specificity. Interacts with host DNA polymerase subunit POLA2. Interacts with host single stranded DNA-binding protein RPA1. Interacts with host TOP1; this interaction stimulates the enzymatic activity of TOP1. In terms of processing, phosphorylated. Sumoylated.

The protein localises to the host nucleus. It carries out the reaction Couples ATP hydrolysis with the unwinding of duplex DNA by translocating in the 3'-5' direction.. It catalyses the reaction ATP + H2O = ADP + phosphate + H(+). In terms of biological role, ATP-dependent DNA 3'-5' helicase required for initiation of viral DNA replication. It forms a complex with the viral E2 protein. The E1-E2 complex binds to the replication origin which contains binding sites for both proteins. During the initial step, a dimer of E1 interacts with a dimer of protein E2 leading to a complex that binds the viral origin of replication with high specificity. Then, a second dimer of E1 displaces the E2 dimer in an ATP-dependent manner to form the E1 tetramer. Following this, two E1 monomers are added to each half of the site, which results in the formation of two E1 trimers on the viral ori. Subsequently, two hexamers will be created. The double hexamer acts as a bi-directional helicase machinery and unwinds the viral DNA and then recruits the host DNA polymerase to start replication. The polypeptide is Replication protein E1 (Cervus elaphus (Red deer)).